Consider the following 413-residue polypeptide: Putative competence-damage inducible protein (413 aa).

This sequence belongs to the CinA family.

This is Putative competence-damage inducible protein from Lacticaseibacillus paracasei (strain ATCC 334 / BCRC 17002 / CCUG 31169 / CIP 107868 / KCTC 3260 / NRRL B-441) (Lactobacillus paracasei).